Here is a 208-residue protein sequence, read N- to C-terminus: FMN-dependent NADH:quinone oxidoreductase (208 aa).

Residues 17–19, 99–102, and 143–146 contribute to the FMN site; these read SNS, MWNL, and SRGG.

The protein belongs to the azoreductase type 1 family. As to quaternary structure, homodimer. Requires FMN as cofactor.

The catalysed reaction is 2 a quinone + NADH + H(+) = 2 a 1,4-benzosemiquinone + NAD(+). The enzyme catalyses N,N-dimethyl-1,4-phenylenediamine + anthranilate + 2 NAD(+) = 2-(4-dimethylaminophenyl)diazenylbenzoate + 2 NADH + 2 H(+). Functionally, quinone reductase that provides resistance to thiol-specific stress caused by electrophilic quinones. Also exhibits azoreductase activity. Catalyzes the reductive cleavage of the azo bond in aromatic azo compounds to the corresponding amines. This Staphylococcus aureus (strain MSSA476) protein is FMN-dependent NADH:quinone oxidoreductase.